A 946-amino-acid chain; its full sequence is DNA primase (946 aa).

Residues 596–626 form a disordered region; the sequence is RDTEEDEDGKEDKNNVPDNGVFQKTTSSVDT. The span at 617–626 shows a compositional bias: polar residues; that stretch reads FQKTTSSVDT. The CHC2-type zinc finger occupies 881-920; it reads CLNYTHRNPQETVQVFIDLRTEHSYALWASLWSRCFTKKC.

The protein belongs to the herpesviridae DNA primase family. As to quaternary structure, associates with the helicase and the primase-associated factor to form the helicase-primase factor.

The protein localises to the host nucleus. In terms of biological role, essential component of the helicase/primase complex. Unwinds the DNA at the replication forks and generates single-stranded DNA for both leading and lagging strand synthesis. The primase initiates primer synthesis and thereby produces large amount of short RNA primers on the lagging strand that the polymerase elongates using dNTPs. This is DNA primase (UL70) from Human cytomegalovirus (strain AD169) (HHV-5).